We begin with the raw amino-acid sequence, 942 residues long: Valine--tRNA ligase (942 aa).

The 'HIGH' region motif lies at 43–53 (PNVTGTLHMGH). The 'KMSKS' region signature appears at 551 to 555 (KMSKS). Residue Lys-554 coordinates ATP. Residues 876–942 (EGLVDLDAER…AGLREQRAKL (67 aa)) are a coiled coil.

The protein belongs to the class-I aminoacyl-tRNA synthetase family. ValS type 1 subfamily. As to quaternary structure, monomer.

Its subcellular location is the cytoplasm. It carries out the reaction tRNA(Val) + L-valine + ATP = L-valyl-tRNA(Val) + AMP + diphosphate. Its function is as follows. Catalyzes the attachment of valine to tRNA(Val). As ValRS can inadvertently accommodate and process structurally similar amino acids such as threonine, to avoid such errors, it has a 'posttransfer' editing activity that hydrolyzes mischarged Thr-tRNA(Val) in a tRNA-dependent manner. In Stenotrophomonas maltophilia (strain K279a), this protein is Valine--tRNA ligase.